The chain runs to 482 residues: UDP-N-acetylmuramate--L-alanine ligase (482 aa).

Residue 123 to 129 participates in ATP binding; it reads GTHGKTT.

This sequence belongs to the MurCDEF family.

Its subcellular location is the cytoplasm. The catalysed reaction is UDP-N-acetyl-alpha-D-muramate + L-alanine + ATP = UDP-N-acetyl-alpha-D-muramoyl-L-alanine + ADP + phosphate + H(+). It participates in cell wall biogenesis; peptidoglycan biosynthesis. Cell wall formation. The sequence is that of UDP-N-acetylmuramate--L-alanine ligase from Pseudomonas putida (strain GB-1).